A 354-amino-acid chain; its full sequence is tRNA-specific 2-thiouridylase MnmA (354 aa).

ATP is bound by residues 6–13 (LLSGGVDS) and L33. C100 serves as the catalytic Nucleophile. An intrachain disulfide couples C100 to C195. Position 123 (G123) interacts with ATP. Positions 145 to 147 (KDQ) are interaction with tRNA. Catalysis depends on C195, which acts as the Cysteine persulfide intermediate.

This sequence belongs to the MnmA/TRMU family.

It localises to the cytoplasm. The catalysed reaction is S-sulfanyl-L-cysteinyl-[protein] + uridine(34) in tRNA + AH2 + ATP = 2-thiouridine(34) in tRNA + L-cysteinyl-[protein] + A + AMP + diphosphate + H(+). Its function is as follows. Catalyzes the 2-thiolation of uridine at the wobble position (U34) of tRNA, leading to the formation of s(2)U34. This Borrelia turicatae (strain 91E135) protein is tRNA-specific 2-thiouridylase MnmA.